Here is a 618-residue protein sequence, read N- to C-terminus: DNA ligase 2 (618 aa).

Residues 197–208 show a composition bias toward basic and acidic residues; it reads DKKTLESREDAK. The segment at 197–250 is disordered; that stretch reads DKKTLESREDAKSVPPASQPEITNKISGDTSPNTSESVQTKKSDPDTSSNVDPS. Residues 216-234 show a composition bias toward polar residues; it reads PEITNKISGDTSPNTSESV. An ATP-binding site is contributed by Glu-312. The active-site N6-AMP-lysine intermediate is the Lys-314. Positions 319, 334, 363, 403, 476, and 482 each coordinate ATP. Positions 459 to 480 are disordered; it reads HEGVMLKDPDSTYNPGSRGQHW.

It belongs to the ATP-dependent DNA ligase family. It depends on Mg(2+) as a cofactor.

The catalysed reaction is ATP + (deoxyribonucleotide)n-3'-hydroxyl + 5'-phospho-(deoxyribonucleotide)m = (deoxyribonucleotide)n+m + AMP + diphosphate.. Its function is as follows. DNA ligase that seals nicks in double-stranded DNA during DNA replication, DNA recombination and DNA repair. The chain is DNA ligase 2 from Haloquadratum walsbyi (strain DSM 16790 / HBSQ001).